The sequence spans 130 residues: Nascent polypeptide-associated complex protein (130 aa).

Residues 8 to 75 (PKMMRQMQKM…AKNIKKDDIK (68 aa)) enclose the NAC-A/B domain.

The protein belongs to the NAC-alpha family. As to quaternary structure, homodimer. Interacts with the ribosome. Binds ribosomal RNA.

Contacts the emerging nascent chain on the ribosome. This Methanococcus aeolicus (strain ATCC BAA-1280 / DSM 17508 / OCM 812 / Nankai-3) protein is Nascent polypeptide-associated complex protein.